A 744-amino-acid chain; its full sequence is 1,4-alpha-glucan branching enzyme GlgB (744 aa).

A disordered region spans residues 1 to 23 (MSGPEDPADRRHGEVPAPRRDIP). The span at 7-23 (PADRRHGEVPAPRRDIP) shows a compositional bias: basic and acidic residues. Residue Asp-424 is the Nucleophile of the active site. Glu-476 serves as the catalytic Proton donor.

It belongs to the glycosyl hydrolase 13 family. GlgB subfamily. In terms of assembly, monomer.

The enzyme catalyses Transfers a segment of a (1-&gt;4)-alpha-D-glucan chain to a primary hydroxy group in a similar glucan chain.. The protein operates within glycan biosynthesis; glycogen biosynthesis. Its function is as follows. Catalyzes the formation of the alpha-1,6-glucosidic linkages in glycogen by scission of a 1,4-alpha-linked oligosaccharide from growing alpha-1,4-glucan chains and the subsequent attachment of the oligosaccharide to the alpha-1,6 position. This Nocardia farcinica (strain IFM 10152) protein is 1,4-alpha-glucan branching enzyme GlgB.